The following is a 61-amino-acid chain: Large ribosomal subunit protein bL32 (61 aa).

The segment covering 1-16 has biased composition (basic residues); sequence MAVPKRKTSPSKRGMR. Positions 1–35 are disordered; it reads MAVPKRKTSPSKRGMRRSADGLKSATYVEDKNSGE.

This sequence belongs to the bacterial ribosomal protein bL32 family.

This Agrobacterium fabrum (strain C58 / ATCC 33970) (Agrobacterium tumefaciens (strain C58)) protein is Large ribosomal subunit protein bL32.